The sequence spans 1024 residues: Eukaryotic translation initiation factor 3 subunit A (1024 aa).

Residues 331-508 (VISSNAPGTG…QAITFQDDVF (178 aa)) form the PCI domain. Coiled coils occupy residues 575 to 717 (AAED…REEA) and 777 to 889 (KRRG…RRSR). 2 stretches are compositionally biased toward basic and acidic residues: residues 797-866 (KERR…ERRA) and 873-886 (DKQRQREEEAEANR). Disordered regions lie at residues 797-973 (KERR…GAYR) and 1001-1024 (AAAAESDGFTEVKKNVYRPPGRRA). 2 stretches are compositionally biased toward low complexity: residues 890 to 906 (AAGTGAAPAQELAAADA) and 946 to 971 (KEAAGGNATAAPSAPAAAPAPASSGA).

It belongs to the eIF-3 subunit A family. As to quaternary structure, component of the eukaryotic translation initiation factor 3 (eIF-3) complex.

The protein resides in the cytoplasm. In terms of biological role, RNA-binding component of the eukaryotic translation initiation factor 3 (eIF-3) complex, which is involved in protein synthesis of a specialized repertoire of mRNAs and, together with other initiation factors, stimulates binding of mRNA and methionyl-tRNAi to the 40S ribosome. The eIF-3 complex specifically targets and initiates translation of a subset of mRNAs involved in cell proliferation. This is Eukaryotic translation initiation factor 3 subunit A from Mycosarcoma maydis (Corn smut fungus).